Consider the following 190-residue polypeptide: Elongation factor P-like protein (190 aa).

This sequence belongs to the elongation factor P family.

This chain is Elongation factor P-like protein, found in Escherichia fergusonii (strain ATCC 35469 / DSM 13698 / CCUG 18766 / IAM 14443 / JCM 21226 / LMG 7866 / NBRC 102419 / NCTC 12128 / CDC 0568-73).